We begin with the raw amino-acid sequence, 63 residues long: Large ribosomal subunit protein bL32 (63 aa).

Positions 1–27 are disordered; that stretch reads MANPKAKMSKSRRDKRRAQFNARTKPV. Positions 7 to 18 are enriched in basic residues; the sequence is KMSKSRRDKRRA.

Belongs to the bacterial ribosomal protein bL32 family.

The sequence is that of Large ribosomal subunit protein bL32 from Chlorobium phaeobacteroides (strain DSM 266 / SMG 266 / 2430).